Consider the following 704-residue polypeptide: Polyribonucleotide nucleotidyltransferase (704 aa).

Mg(2+)-binding residues include D487 and D493. In terms of domain architecture, KH spans 554-613 (PRLLTIKIHPDKIREVIGKGGSTIQAITKETGTQIDIQDDGTIIIASVNAIAAQAAKSRI). The 69-residue stretch at 623-691 (GRIYEGKVAK…KQGRIRLSIK (69 aa)) folds into the S1 motif domain.

It belongs to the polyribonucleotide nucleotidyltransferase family. As to quaternary structure, component of the RNA degradosome, which is a multiprotein complex involved in RNA processing and mRNA degradation. It depends on Mg(2+) as a cofactor.

It localises to the cytoplasm. It catalyses the reaction RNA(n+1) + phosphate = RNA(n) + a ribonucleoside 5'-diphosphate. In terms of biological role, involved in mRNA degradation. Catalyzes the phosphorolysis of single-stranded polyribonucleotides processively in the 3'- to 5'-direction. The polypeptide is Polyribonucleotide nucleotidyltransferase (Xanthomonas axonopodis pv. citri (strain 306)).